Consider the following 175-residue polypeptide: MAAPVLRVSTPRWERIARVLVCLLGILLSLYAFHVEREHARDPSYKALCDVSSSISCSKVFGSRWGRGFGLLGSIFGNDSALNQPNSVYGIVFYAFQLLLGMTVSAMAALILMTTSIMSVVGSLYLGYILYFVLKDLCVICVTTYALNFILFVLNYKRLVYLNEAWKQKLQAKQD.

The Cytoplasmic portion of the chain corresponds to 1 to 12 (MAAPVLRVSTPR). Residues 13–35 (WERIARVLVCLLGILLSLYAFHV) form a helical membrane-spanning segment. The Lumenal segment spans residues 36-86 (EREHARDPSYKALCDVSSSISCSKVFGSRWGRGFGLLGSIFGNDSALNQPN). The cysteines at positions 49 and 57 are disulfide-linked. Residue Asn-86 participates in (S)-warfarin binding. The helical transmembrane segment at 87–101 (SVYGIVFYAFQLLLG) threads the bilayer. Residues 102–106 (MTVSA) are Cytoplasmic-facing. The helical transmembrane segment at 107-134 (MAALILMTTSIMSVVGSLYLGYILYFVL) threads the bilayer. The Lumenal segment spans residues 135-137 (KDL). A disulfide bridge links Cys-138 with Cys-141. A helical membrane pass occupies residues 138-159 (CVICVTTYALNFILFVLNYKRL). Phylloquinone contacts are provided by Cys-141 and Tyr-145. Tyr-145 lines the (S)-warfarin pocket. Residues 160 to 175 (VYLNEAWKQKLQAKQD) are Cytoplasmic-facing.

It belongs to the VKOR family.

The protein localises to the endoplasmic reticulum membrane. It catalyses the reaction phylloquinone + [protein]-disulfide + H2O = 2,3-epoxyphylloquinone + [protein]-dithiol. The catalysed reaction is phylloquinol + [protein]-disulfide = phylloquinone + [protein]-dithiol. Inhibited by warfarin (coumadin). Warfarin locks VKORC1 in both redox states into the closed conformation. Functionally, involved in vitamin K metabolism. Can reduce inactive vitamin K 2,3-epoxide to active vitamin K, and may contribute to vitamin K-mediated protection against oxidative stress. Plays a role in vitamin K-dependent gamma-carboxylation of Glu residues in target proteins. This chain is Vitamin K epoxide reductase complex subunit 1-like protein 1 (vkorc1l1), found in Takifugu rubripes (Japanese pufferfish).